Consider the following 187-residue polypeptide: Peptidyl-tRNA hydrolase (187 aa).

Tyrosine 15 provides a ligand contact to tRNA. Residue histidine 20 is the Proton acceptor of the active site. TRNA is bound by residues phenylalanine 64, asparagine 66, and asparagine 112.

It belongs to the PTH family. In terms of assembly, monomer.

It is found in the cytoplasm. The enzyme catalyses an N-acyl-L-alpha-aminoacyl-tRNA + H2O = an N-acyl-L-amino acid + a tRNA + H(+). Hydrolyzes ribosome-free peptidyl-tRNAs (with 1 or more amino acids incorporated), which drop off the ribosome during protein synthesis, or as a result of ribosome stalling. In terms of biological role, catalyzes the release of premature peptidyl moieties from peptidyl-tRNA molecules trapped in stalled 50S ribosomal subunits, and thus maintains levels of free tRNAs and 50S ribosomes. In Parabacteroides distasonis (strain ATCC 8503 / DSM 20701 / CIP 104284 / JCM 5825 / NCTC 11152), this protein is Peptidyl-tRNA hydrolase.